We begin with the raw amino-acid sequence, 134 residues long: MDSRTGELLTYTQCQTGCYFDDIKNPIYFRLQNTTTMATGNKIITLQIRANHNLRKVLGLQICWLNLVVLSVSPRLSGEALLDRFKFHVMKHLNNLGVISINNVIRSINHFIDLFDQRVFYAPSFYYNIKMRLY.

It belongs to the geminiviridae replication enhancer protein family. In terms of assembly, homooligomer. Interacts with the replication-associated protein (REP). Interacts with host proliferating cell nuclear antigen (PCNA). Interacts with host retinoblastoma-related protein 1 (RBR1), and may thereby deregulate the host cell cycle. Oligomerization and interaction with PCNA are necessary for optimal replication enhancement.

Its function is as follows. Increases viral DNA accumulation. Enhances infectivity and symptom expression. The protein is Replication enhancer protein of Tomato pseudo-curly top virus (TPCTV).